A 1112-amino-acid polypeptide reads, in one-letter code: Phytochrome E (1112 aa).

A disordered region spans residues 1–20; sequence MGFESSSSAASNMKPQPQKS. One can recognise a GAF domain in the interval 217–387; sequence DIGALCDTVV…AFGLQLQMEL (171 aa). Residue Cys322 participates in phytochromobilin binding. PAS domains are found at residues 595–666 and 732–803; these read FVCE…LQGE and DYKT…LISL. The Histidine kinase domain maps to 877–1096; it reads YVRQEIKNPL…FFQVDLQVKT (220 aa).

Belongs to the phytochrome family. As to quaternary structure, homodimer. Post-translationally, contains one covalently linked phytochromobilin chromophore.

Functionally, regulatory photoreceptor which exists in two forms that are reversibly interconvertible by light: the Pr form that absorbs maximally in the red region of the spectrum and the Pfr form that absorbs maximally in the far-red region. Photoconversion of Pr to Pfr induces an array of morphogenic responses, whereas reconversion of Pfr to Pr cancels the induction of those responses. Pfr controls the expression of a number of nuclear genes including those encoding the small subunit of ribulose-bisphosphate carboxylase, chlorophyll A/B binding protein, protochlorophyllide reductase, rRNA, etc. It also controls the expression of its own gene(s) in a negative feedback fashion. The chain is Phytochrome E (PHYE) from Arabidopsis thaliana (Mouse-ear cress).